Consider the following 446-residue polypeptide: Argininosuccinate synthase (446 aa).

ATP is bound by residues 17–25 (AFSGGLDTS) and Ala-43. Residue Tyr-99 participates in L-citrulline binding. Gly-129 and Thr-131 together coordinate ATP. Thr-131, Asn-135, and Asp-136 together coordinate L-aspartate. Asn-135 is an L-citrulline binding site. An ATP-binding site is contributed by Asp-136. 2 residues coordinate L-citrulline: Arg-139 and Ser-192. An ATP-binding site is contributed by Asp-194. L-citrulline contacts are provided by Thr-201, Glu-203, and Glu-280.

The protein belongs to the argininosuccinate synthase family. Type 2 subfamily. As to quaternary structure, homotetramer.

The protein resides in the cytoplasm. It catalyses the reaction L-citrulline + L-aspartate + ATP = 2-(N(omega)-L-arginino)succinate + AMP + diphosphate + H(+). It functions in the pathway amino-acid biosynthesis; L-arginine biosynthesis; L-arginine from L-ornithine and carbamoyl phosphate: step 2/3. This is Argininosuccinate synthase from Burkholderia thailandensis (strain ATCC 700388 / DSM 13276 / CCUG 48851 / CIP 106301 / E264).